Consider the following 444-residue polypeptide: Putative zinc metalloprotease PD_0327 (444 aa).

His-22 is a binding site for Zn(2+). Glu-23 is an active-site residue. A Zn(2+)-binding site is contributed by His-26. The helical transmembrane segment at Ile-98–Phe-120 threads the bilayer. The PDZ domain occupies Thr-192–Gly-278. Helical transmembrane passes span Val-371–Ile-393 and Ala-418–Asn-440.

Belongs to the peptidase M50B family. Zn(2+) is required as a cofactor.

The protein localises to the cell inner membrane. The polypeptide is Putative zinc metalloprotease PD_0327 (Xylella fastidiosa (strain Temecula1 / ATCC 700964)).